Here is a 956-residue protein sequence, read N- to C-terminus: MSFTPTDYNAYDFANRRHIGPSPSEMEEMLRVVGVSSLDQLIEETVPASIRQETPLDWAPLAEHELLARMREVAAKNRVMTSLIGQGYYGTVTPPAIQRNILENPAWYTAYTPYQPEIAQGRLEALLNYQTMVADLTGLPVANASLLDEATAAAEAMTMAERASKSKARAFFVDADCHPQTISVIRTRAEPLGIEVIVGHPAQLVPEDVFGALFQYPGTYGLVRDFTRDIAALHEAKALAVVATDLLALCLLKEPGAMGADIAIGSSQRFGVPMGYGGPHAAFMSCKDDLKRSMPGRLVGVSVDARGNKAYRLALQTREQHIRREKATSNVCTAQALLAVMASFYAVFHGPRGLRAIAERVHLNTVRLATALKEAGARVSPEAFFDTITVEVGVGQAGILAAARHRGINLRKVGRDRVGISLDETTDAGVIARVLDAFGIHEPAPAKVGLGFPEPLLRETGYLSHPVFQMNRAESEMMRYMRRLSDRDLALDRAMIPLGSCTMKLNAAAEMMPITWPEFGTLHPFAPADQAAGYHEAIGDLAQRLCRITGYDAMSMQPNSGAQGEYAGLLTILAYHRARGDAERTICLIPVSAHGTNPASAQMAGMKVVVVKSAPNGDVDLEDFRDKAAAAGDRLAACMITYPSTHGVFEETVREVCRITHEHGGQVYIDGANMNAMVGLVQPGAIGGDVSHLNLHKTFAIPHGGGGPGMGPIGVKAHLAPYLPGHPEVTGPLTGGHDEAADEGPVSAAPYGSASILLISWAYCLMMGGEGLTQATRVAILNANYIAARLRGAYKVLFMGNRGRVAHECILDTRPFAEAGVTVDDIAKRLIDNGFHAPTMSWPVPGTLMVEPTESETKAEIDRFVAALLAIREEIRAVEEGEIAAADSPLRHAPHTVEDLVADWDRKYPREQGCFPPGSFRVDKYWPPVGRVDNAWGDRNLVCTCPPVESYSIAAQ.

Lysine 697 carries the post-translational modification N6-(pyridoxal phosphate)lysine.

The protein belongs to the GcvP family. The glycine cleavage system is composed of four proteins: P, T, L and H. It depends on pyridoxal 5'-phosphate as a cofactor.

The catalysed reaction is N(6)-[(R)-lipoyl]-L-lysyl-[glycine-cleavage complex H protein] + glycine + H(+) = N(6)-[(R)-S(8)-aminomethyldihydrolipoyl]-L-lysyl-[glycine-cleavage complex H protein] + CO2. Functionally, the glycine cleavage system catalyzes the degradation of glycine. The P protein binds the alpha-amino group of glycine through its pyridoxal phosphate cofactor; CO(2) is released and the remaining methylamine moiety is then transferred to the lipoamide cofactor of the H protein. The chain is Glycine dehydrogenase (decarboxylating) from Cereibacter sphaeroides (strain KD131 / KCTC 12085) (Rhodobacter sphaeroides).